A 111-amino-acid chain; its full sequence is Large ribosomal subunit protein uL23 (111 aa).

The protein belongs to the universal ribosomal protein uL23 family. As to quaternary structure, part of the 50S ribosomal subunit. Contacts protein L29, and trigger factor when it is bound to the ribosome.

In terms of biological role, one of the early assembly proteins it binds 23S rRNA. One of the proteins that surrounds the polypeptide exit tunnel on the outside of the ribosome. Forms the main docking site for trigger factor binding to the ribosome. The chain is Large ribosomal subunit protein uL23 from Chlamydia trachomatis serovar L2 (strain ATCC VR-902B / DSM 19102 / 434/Bu).